A 261-amino-acid chain; its full sequence is MEVIILPDPGRIGSLAADAITALITRKPDAVLGLATGSSPLAVYDELVSRYEAGQISFRQARGFTLDEYVGLPADHPERYRNVIDTAFAARVDFAPGAVQGPDGLADDIPAACAAYEAAIRDAGGVDLQILGIGTDGHIAFNEPGSSLASRTRIKTLTRQTRVDNARFFGGDLDQVPTHCLTQGLGTIMEARHLILIAMGRSKAEAVHHLVEGAVSAMWPATVLQMHPHVTVLLDDAAAQRLQLVDYYRETYRAKPAWQGI.

Aspartate 67 functions as the Proton acceptor; for enolization step in the catalytic mechanism. The active-site For ring-opening step is aspartate 136. Histidine 138 serves as the catalytic Proton acceptor; for ring-opening step. Glutamate 143 acts as the For ring-opening step in catalysis.

It belongs to the glucosamine/galactosamine-6-phosphate isomerase family. NagB subfamily.

It carries out the reaction alpha-D-glucosamine 6-phosphate + H2O = beta-D-fructose 6-phosphate + NH4(+). The protein operates within amino-sugar metabolism; N-acetylneuraminate degradation; D-fructose 6-phosphate from N-acetylneuraminate: step 5/5. In terms of biological role, catalyzes the reversible isomerization-deamination of glucosamine 6-phosphate (GlcN6P) to form fructose 6-phosphate (Fru6P) and ammonium ion. This chain is Glucosamine-6-phosphate deaminase, found in Mycolicibacterium smegmatis (strain ATCC 700084 / mc(2)155) (Mycobacterium smegmatis).